The primary structure comprises 120 residues: Ribonuclease P protein component (120 aa).

The protein belongs to the RnpA family. Consists of a catalytic RNA component (M1 or rnpB) and a protein subunit.

It carries out the reaction Endonucleolytic cleavage of RNA, removing 5'-extranucleotides from tRNA precursor.. In terms of biological role, RNaseP catalyzes the removal of the 5'-leader sequence from pre-tRNA to produce the mature 5'-terminus. It can also cleave other RNA substrates such as 4.5S RNA. The protein component plays an auxiliary but essential role in vivo by binding to the 5'-leader sequence and broadening the substrate specificity of the ribozyme. This chain is Ribonuclease P protein component, found in Dehalococcoides mccartyi (strain ATCC BAA-2266 / KCTC 15142 / 195) (Dehalococcoides ethenogenes (strain 195)).